A 166-amino-acid polypeptide reads, in one-letter code: Cyanate hydratase (166 aa).

Residues R92, E95, and S118 contribute to the active site.

This sequence belongs to the cyanase family.

The enzyme catalyses cyanate + hydrogencarbonate + 3 H(+) = NH4(+) + 2 CO2. Its function is as follows. Catalyzes the reaction of cyanate with bicarbonate to produce ammonia and carbon dioxide. The chain is Cyanate hydratase from Zea mays (Maize).